The chain runs to 262 residues: Malonyl-[acyl-carrier protein] O-methyltransferase (262 aa).

It belongs to the methyltransferase superfamily.

The catalysed reaction is malonyl-[ACP] + S-adenosyl-L-methionine = malonyl-[ACP] methyl ester + S-adenosyl-L-homocysteine. Its pathway is cofactor biosynthesis; biotin biosynthesis. Converts the free carboxyl group of a malonyl-thioester to its methyl ester by transfer of a methyl group from S-adenosyl-L-methionine (SAM). It allows to synthesize pimeloyl-ACP via the fatty acid synthetic pathway. In Erwinia pyrifoliae (strain DSM 12163 / CIP 106111 / Ep16/96), this protein is Malonyl-[acyl-carrier protein] O-methyltransferase.